We begin with the raw amino-acid sequence, 90 residues long: Small ribosomal subunit protein bS16 (90 aa).

It belongs to the bacterial ribosomal protein bS16 family.

This chain is Small ribosomal subunit protein bS16, found in Geobacillus thermodenitrificans (strain NG80-2).